The primary structure comprises 1102 residues: PAN2-PAN3 deadenylation complex catalytic subunit PAN2 (1102 aa).

3 WD repeats span residues 20 to 59, 104 to 144, and 269 to 308; these read DYPRPATALAFDTIAELLWAGNDRGRVVSFYGRDLQRYTA, DEME…IVKQ, and NVMSFINLFEIAPSGEALAMADTECNIHLWGSPSKIHFTD. The linker stretch occupies residues 308–445; it reads DMAIPIEMPK…STDELESLKP (138 aa). The tract at residues 423 to 442 is disordered; sequence AVPDPKVEQVPESSTDELES. The USP domain occupies 446–833; the sequence is EAPPIYRNLE…LPAVLLFQVK (388 aa). In terms of domain architecture, Exonuclease spans 881–1054; it reads VGLDTEFVSL…EDARTALKLY (174 aa). Residues aspartate 884, glutamate 886, aspartate 993, and aspartate 1046 each coordinate a divalent metal cation.

The protein belongs to the peptidase C19 family. PAN2 subfamily. Forms a heterotrimer with an asymmetric homodimer of the regulatory subunit PAN3 to form the poly(A)-nuclease (PAN) deadenylation complex. Requires a divalent metal cation as cofactor.

The protein localises to the cytoplasm. It catalyses the reaction Exonucleolytic cleavage of poly(A) to 5'-AMP.. With respect to regulation, positively regulated by the regulatory subunit PAN3. Its function is as follows. Catalytic subunit of the poly(A)-nuclease (PAN) deadenylation complex, one of two cytoplasmic mRNA deadenylases involved in mRNA turnover. PAN specifically shortens poly(A) tails of RNA and the activity is stimulated by poly(A)-binding protein PAB1. PAN deadenylation is followed by rapid degradation of the shortened mRNA tails by the CCR4-NOT complex. Deadenylated mRNAs are then degraded by two alternative mechanisms, namely exosome-mediated 3'-5' exonucleolytic degradation, or deadenylation-dependent mRNA decaping and subsequent 5'-3' exonucleolytic degradation by XRN1. May also be involved in post-transcriptional maturation of mRNA poly(A) tails. The protein is PAN2-PAN3 deadenylation complex catalytic subunit PAN2 of Chaetomium globosum (strain ATCC 6205 / CBS 148.51 / DSM 1962 / NBRC 6347 / NRRL 1970) (Soil fungus).